We begin with the raw amino-acid sequence, 213 residues long: Adenylate kinase (213 aa).

Gly10–Thr15 contributes to the ATP binding site. An NMP region spans residues Ser30–Val59. AMP-binding positions include Thr31, Arg36, Asp57 to Val59, Gly86 to Arg89, and Gln93. The tract at residues Gly127–Asp160 is LID. Residues Arg128 and Thr137 to Phe138 contribute to the ATP site. Positions 157 and 168 each coordinate AMP. Lys196 serves as a coordination point for ATP.

It belongs to the adenylate kinase family. As to quaternary structure, monomer.

Its subcellular location is the cytoplasm. It catalyses the reaction AMP + ATP = 2 ADP. It participates in purine metabolism; AMP biosynthesis via salvage pathway; AMP from ADP: step 1/1. Its function is as follows. Catalyzes the reversible transfer of the terminal phosphate group between ATP and AMP. Plays an important role in cellular energy homeostasis and in adenine nucleotide metabolism. This Streptococcus equi subsp. equi (strain 4047) protein is Adenylate kinase.